Consider the following 406-residue polypeptide: L-carnitine CoA-transferase (406 aa).

Residues Lys98 and Arg105 each contribute to the CoA site. Asp170 acts as the Nucleophile in catalysis.

This sequence belongs to the CoA-transferase III family. CaiB subfamily. Homodimer.

Its subcellular location is the cytoplasm. The catalysed reaction is crotonobetainyl-CoA + (R)-carnitine = crotonobetaine + (R)-carnitinyl-CoA. The enzyme catalyses 4-(trimethylamino)butanoyl-CoA + (R)-carnitine = (R)-carnitinyl-CoA + 4-(trimethylamino)butanoate. It participates in amine and polyamine metabolism; carnitine metabolism. In terms of biological role, catalyzes the reversible transfer of the CoA moiety from gamma-butyrobetainyl-CoA to L-carnitine to generate L-carnitinyl-CoA and gamma-butyrobetaine. Is also able to catalyze the reversible transfer of the CoA moiety from gamma-butyrobetainyl-CoA or L-carnitinyl-CoA to crotonobetaine to generate crotonobetainyl-CoA. This chain is L-carnitine CoA-transferase, found in Proteus mirabilis (strain HI4320).